The sequence spans 274 residues: MKIELVQLAGRDGDTAYNLSRTLNAIATCAGDTDLLVFPETYLSGFVGGAQLAQVAEPLHGTTLQTLLQAVRQRDVAVVLGFAEVHQGRFYNSSVLVTPEGIALQYRKTHLWPSERSDFSPGDRFTTVLWRGVRVGLLICYDIELPETSRALAQLGAEVVIVTNGNMDPYGPVHRTAIMARAQENQLFAVMVNRVGAGDDGLVFAGGSMAVDPFGRVLFEAGRDEVRHVVELDLDQLKAARRDYDYLKDRRLMLSGEQTEHPDGRRELLIGASQ.

Residues 1–234 form the CN hydrolase domain; sequence MKIELVQLAG…EVRHVVELDL (234 aa). Glu-40 (proton acceptor) is an active-site residue. Lys-108 (proton donor) is an active-site residue. Cys-140 (nucleophile) is an active-site residue.

As to quaternary structure, monomer.

It carries out the reaction (R)-piperazine-2-carboxamide + H2O = (R)-piperazine-2-carboxylate + NH4(+). The enzyme catalyses beta-alaninamide + H2O = beta-alanine + NH4(+). With respect to regulation, completely inhibited by p-chloromercuribenzoate, N-ethylmaleimide, MnSO(4), MnCl(2), CoCl(2), NiCl(2), CuSO(4), CuCl(2), ZnSO(4), ZnCl(2), AgNO(3), CdCl(2), HgCl(2) and PbCl(2). Partially inhibited by FeCl(3) and Fe(NH(4))(2)(SO(4))(2). Slightly enhanced by dithiothreitol. Unaffected by LiBr, H(2)BO(3), NaCl, MgSO(4), MgCl(2), AlCl(3), KCl, CaCl(2), CrCl(3), RbCl, Na(2)MoO(4), (NH(4))(6)Mo(7)O(24), CsCl and BaCl(2). Unaffected by the chelating agents o-phenanthroline, 8-hydroxyquinoline, enthylenediaminetetraacetic acid and alpha,alpha'-dipyridyl. Not inhibited by the carbonyl reagents hydroxylamine, phenylhydrazine, hydrazine, D,L-penicillamine and D-cycloserine. Not affected by the serine protease inhibitor phenylmethanesulfonyl fluoride, the serine/cysteine protease inhibitor leupeptine or the aspartic protease inhibitor pepstatin. Hydrolyzes (R)-piperazine-2-carboxamide and (R)-piperazine-2-tert-butylcarboxamide with strict R-stereoselectivity. Also active towards beta-alaninamide, piperidine-3-carboxmide, D-glutaminamide and slightly active towards L-glutaminamide and piperidine-4-carboxamide. This chain is (R)-stereoselective amidase, found in Pseudomonas sp.